The following is a 414-amino-acid chain: Probable protein phosphatase 2C 9 (414 aa).

A helical membrane pass occupies residues 15-37; it reads TATAAVAAAVSASAAAAVSSAID. The tract at residues 56 to 95 is disordered; sequence LQAGEDGRPGKRQRLARTASGAPRPDEDSASERPSCGRTE. In terms of domain architecture, PPM-type phosphatase spans 99–410; it reads RYGVTAVCGR…DNVSVVVVDL (312 aa). Mn(2+) is bound by residues Asp-136 and Gly-137. Basic and acidic residues predominate over residues 186-195; sequence GNRASTRSDD. Residues 186 to 212 are disordered; that stretch reads GNRASTRSDDEPACPCEQQTPSRRDHA. Residue Asp-319 participates in Mn(2+) binding. The tract at residues 345-372 is disordered; it reads APAARPSGVPSSAEAAETENGGAASVKG. The segment covering 355-369 has biased composition (low complexity); the sequence is SSAEAAETENGGAAS. Residue Asp-401 participates in Mn(2+) binding.

Belongs to the PP2C family. It depends on Mg(2+) as a cofactor. Mn(2+) serves as cofactor.

It localises to the membrane. The enzyme catalyses O-phospho-L-seryl-[protein] + H2O = L-seryl-[protein] + phosphate. It carries out the reaction O-phospho-L-threonyl-[protein] + H2O = L-threonyl-[protein] + phosphate. In Oryza sativa subsp. japonica (Rice), this protein is Probable protein phosphatase 2C 9.